Here is a 157-residue protein sequence, read N- to C-terminus: Histidine-containing phosphotransfer protein 5 (157 aa).

At M1 the chain carries N-acetylmethionine. The HPt domain maps to 41 to 148 (TPDFVAEVVS…NLEKQILQAG (108 aa)). A Phosphohistidine modification is found at H83.

In terms of assembly, interacts with the B-type response regulators ARR1 and ARR2. Binds to AHK2, AHK3, AHK4 and AHK5. Post-translationally, two-component system major event consists of a His-to-Asp phosphorelay between a sensor histidine kinase (HK) and a response regulator (RR). In plants, the His-to-Asp phosphorelay involves an additional intermediate named Histidine-containing phosphotransfer protein (HPt). This multistep phosphorelay consists of a His-Asp-His-Asp sequential transfer of a phosphate group between first a His and an Asp of the HK protein, followed by the transfer to a conserved His of the HPt protein and finally the transfer to an Asp in the receiver domain of the RR protein. In terms of tissue distribution, expressed in the whole plant.

It is found in the cytoplasm. The protein resides in the cytosol. The protein localises to the nucleus. Functionally, functions as a two-component phosphorelay mediator between cytokinin sensor histidine kinases and response regulators (B-type ARRs). Plays an important role in propagating cytokinin signal transduction through the multistep His-to-Asp phosphorelay. This chain is Histidine-containing phosphotransfer protein 5 (AHP5), found in Arabidopsis thaliana (Mouse-ear cress).